Consider the following 329-residue polypeptide: Probable ABC transporter permease protein MG188 homolog (329 aa).

A run of 6 helical transmembrane segments spans residues 30–50, 96–116, 128–148, 176–196, 234–254, and 283–303; these read FLLF…PFFL, IISL…IVFV, VFFL…IYIL, ALWG…VLVI, LIFL…ISLF, and NFAG…GLVL. The ABC transmembrane type-1 domain occupies 88-303; it reads LRNSFLYSII…ILGVCYGLVL (216 aa).

It belongs to the binding-protein-dependent transport system permease family. MalFG subfamily.

The protein localises to the cell membrane. Functionally, probably part of a binding-protein-dependent transport system. Probably responsible for the translocation of the substrate across the membrane. The protein is Probable ABC transporter permease protein MG188 homolog of Mycoplasma pneumoniae (strain ATCC 29342 / M129 / Subtype 1) (Mycoplasmoides pneumoniae).